The following is a 548-amino-acid chain: Telomerase Cajal body protein 1 (548 aa).

Residues 1–142 form a disordered region; sequence MKTLETQPLA…SGEPAAEDEG (142 aa). Residues 15 to 31 are compositionally biased toward low complexity; sequence PSDQDPAPAHPSPHASP. A phosphoserine mark is found at Ser26, Ser30, and Ser54. Ser64 carries the post-translational modification Phosphoserine; by ATM. 4 positions are modified to phosphoserine: Ser85, Ser90, Ser112, and Ser114. WD repeat units follow at residues 167 to 206, 222 to 267, 272 to 313, 323 to 364, 365 to 405, and 411 to 450; these read QPENFLKGCKWAPDGSCILTNSADNILRIYNLPPELYHEG, EGDT…LRAS, NHLD…RDCE, GQSG…ALLG, GHQG…YPLW, and VTTNQRIYFDLDPTGQFLVSGSTSGAVSVWDTDGPGNDGK. Thr489 is modified (phosphothreonine). At Ser491 the chain carries Phosphoserine. The interval 526–548 is disordered; that stretch reads SIPDDHQGEKGQGGTEGGVGELI. Over residues 535–548 the composition is skewed to gly residues; that stretch reads KGQGGTEGGVGELI.

Belongs to the TCAB1 family. As to quaternary structure, component of the telomerase holoenzyme complex composed of one molecule of TERT, one molecule of WRAP53/TCAB1, two molecules of H/ACA ribonucleoprotein complex subunits DKC1, NOP10, NHP2 and GAR1, and a telomerase RNA template component (TERC). The telomerase holoenzyme complex is associated with TEP1, SMG6/EST1A and POT1. Interacts with the chaperonin-containing T-complex (TRiC) complex; which mediates the folding of WRAP53/TCAB1. Interacts with COIL. Interacts with SMN1. Interacts with RNF8. Interacts with histone H2AX. Phosphorylated at Ser-64 by ATM in response to DNA damage, promoting its interaction with histone H2AX and localization to sites of DNA double-strand breaks. As to expression, expressed in all tissues and cell lines examined.

It localises to the nucleus. The protein resides in the cajal body. Its subcellular location is the chromosome. It is found in the telomere. Functionally, RNA chaperone that plays a key role in telomere maintenance and RNA localization to Cajal bodies. Specifically recognizes and binds the Cajal body box (CAB box) present in both small Cajal body RNAs (scaRNAs) and telomerase RNA template component (TERC). Essential component of the telomerase holoenzyme complex, a ribonucleoprotein complex essential for the replication of chromosome termini that elongates telomeres in most eukaryotes. In the telomerase holoenzyme complex, required to stimulate the catalytic activity of the complex. Acts by specifically binding the CAB box of the TERC RNA and controlling the folding of the CR4/CR5 region of the TERC RNA, a critical step for telomerase activity. In addition, also controls telomerase holoenzyme complex localization to Cajal body. During S phase, required for delivery of TERC to telomeres during S phase and for telomerase activity. In addition to its role in telomere maintenance, also required for Cajal body formation, probably by mediating localization of scaRNAs to Cajal bodies. Also plays a role in DNA repair: phosphorylated by ATM in response to DNA damage and relocalizes to sites of DNA double-strand breaks to promote the repair of DNA double-strand breaks. Acts by recruiting the ubiquitin ligase RNF8 to DNA breaks and promote both homologous recombination (HR) and non-homologous end joining (NHEJ). This Homo sapiens (Human) protein is Telomerase Cajal body protein 1.